Here is a 274-residue protein sequence, read N- to C-terminus: Large ribosomal subunit protein uL2 (274 aa).

Disordered regions lie at residues 28 to 54 (APHAPLLEKKSKTGGRNNNGRITTRHI) and 224 to 274 (VAMN…RRRK). Positions 263–274 (KRTDKMIVRRRK) are enriched in basic and acidic residues.

The protein belongs to the universal ribosomal protein uL2 family. As to quaternary structure, part of the 50S ribosomal subunit. Forms a bridge to the 30S subunit in the 70S ribosome.

In terms of biological role, one of the primary rRNA binding proteins. Required for association of the 30S and 50S subunits to form the 70S ribosome, for tRNA binding and peptide bond formation. It has been suggested to have peptidyltransferase activity; this is somewhat controversial. Makes several contacts with the 16S rRNA in the 70S ribosome. The sequence is that of Large ribosomal subunit protein uL2 from Pseudomonas syringae pv. tomato (strain ATCC BAA-871 / DC3000).